A 365-amino-acid chain; its full sequence is Succinyl-diaminopimelate desuccinylase (365 aa).

Residue His64 participates in Zn(2+) binding. The active site involves Asp66. Asp95 serves as a coordination point for Zn(2+). Glu125 (proton acceptor) is an active-site residue. The Zn(2+) site is built by Glu126, Glu154, and His339.

This sequence belongs to the peptidase M20A family. DapE subfamily. As to quaternary structure, homodimer. Requires Zn(2+) as cofactor. It depends on Co(2+) as a cofactor.

The enzyme catalyses N-succinyl-(2S,6S)-2,6-diaminopimelate + H2O = (2S,6S)-2,6-diaminopimelate + succinate. The protein operates within amino-acid biosynthesis; L-lysine biosynthesis via DAP pathway; LL-2,6-diaminopimelate from (S)-tetrahydrodipicolinate (succinylase route): step 3/3. Functionally, catalyzes the hydrolysis of N-succinyl-L,L-diaminopimelic acid (SDAP), forming succinate and LL-2,6-diaminopimelate (DAP), an intermediate involved in the bacterial biosynthesis of lysine and meso-diaminopimelic acid, an essential component of bacterial cell walls. This Campylobacter curvus (strain 525.92) protein is Succinyl-diaminopimelate desuccinylase.